Reading from the N-terminus, the 184-residue chain is Large ribosomal subunit protein uL6 (184 aa).

This sequence belongs to the universal ribosomal protein uL6 family. Part of the 50S ribosomal subunit.

Its function is as follows. This protein binds to the 23S rRNA, and is important in its secondary structure. It is located near the subunit interface in the base of the L7/L12 stalk, and near the tRNA binding site of the peptidyltransferase center. The protein is Large ribosomal subunit protein uL6 of Thermococcus gammatolerans (strain DSM 15229 / JCM 11827 / EJ3).